The chain runs to 202 residues: Dephospho-CoA kinase (202 aa).

Residues 6–202 (KVSITGDLSS…EYFYALKGAL (197 aa)) enclose the DPCK domain. 14-19 (SSGKTE) provides a ligand contact to ATP.

It belongs to the CoaE family.

The protein localises to the cytoplasm. It catalyses the reaction 3'-dephospho-CoA + ATP = ADP + CoA + H(+). It functions in the pathway cofactor biosynthesis; coenzyme A biosynthesis; CoA from (R)-pantothenate: step 5/5. Functionally, catalyzes the phosphorylation of the 3'-hydroxyl group of dephosphocoenzyme A to form coenzyme A. This Chlamydia abortus (strain DSM 27085 / S26/3) (Chlamydophila abortus) protein is Dephospho-CoA kinase.